Reading from the N-terminus, the 468-residue chain is 3-isopropylmalate dehydratase large subunit (468 aa).

Residues cysteine 349, cysteine 409, and cysteine 412 each contribute to the [4Fe-4S] cluster site.

It belongs to the aconitase/IPM isomerase family. LeuC type 1 subfamily. Heterodimer of LeuC and LeuD. [4Fe-4S] cluster serves as cofactor.

It catalyses the reaction (2R,3S)-3-isopropylmalate = (2S)-2-isopropylmalate. It participates in amino-acid biosynthesis; L-leucine biosynthesis; L-leucine from 3-methyl-2-oxobutanoate: step 2/4. Its function is as follows. Catalyzes the isomerization between 2-isopropylmalate and 3-isopropylmalate, via the formation of 2-isopropylmaleate. The chain is 3-isopropylmalate dehydratase large subunit from Nitrobacter hamburgensis (strain DSM 10229 / NCIMB 13809 / X14).